The chain runs to 213 residues: Membrane-spanning 4-domains subfamily A member 3 (213 aa).

Over 1 to 26 the chain is Cytoplasmic; that stretch reads MKPEETGGSVYQPLDESRHVQRGVLQ. The chain crosses the membrane as a helical span at residues 27–47; the sequence is ALGAIQILNGILILALGIFLV. Over 48-58 the chain is Extracellular; the sequence is CLQHVSHHFRH. Residues 59–79 form a helical membrane-spanning segment; that stretch reads FFFFTFYTGYPLWGAVFFISS. The Cytoplasmic portion of the chain corresponds to 80 to 97; the sequence is GSLTVAAGRNPTRMLMQN. The helical transmembrane segment at 98–118 threads the bilayer; it reads SFGINIASTTIAFVGTVFLSV. The Extracellular portion of the chain corresponds to 119-148; that stretch reads HLAFNTQAFKGCQSSPSPDVCISLGSSSDG. A helical membrane pass occupies residues 149 to 169; it reads LVSLMLILTLLELSVTISISA. The Cytoplasmic portion of the chain corresponds to 170–213; that stretch reads MWCLGNVCGLREAITSPPNSVESGILPEGSDSENLNTQPQASEE. The tract at residues 189–213 is disordered; it reads SVESGILPEGSDSENLNTQPQASEE. The span at 201 to 213 shows a compositional bias: polar residues; that stretch reads SENLNTQPQASEE.

Belongs to the MS4A family. In terms of assembly, interacts with CDKN3. Interacts with CDKN3-CDK2 complexes through its binding to CDKN3; this interaction facilitates dissociation of cyclin A from CDKN3-CDK2 complexes. Expressed at low levels only in specific immune tissues, such as, spleen, bone marrow and peripheral blood leukocytes.

Its subcellular location is the membrane. Hematopoietic modulator for the G1-S cell cycle transition. Modulates the level of phosphorylation of cyclin-dependent kinase 2 (CDK2) through its direct binding to cyclin-dependent kinase inhibitor 3 (CDKN3/KAP). This chain is Membrane-spanning 4-domains subfamily A member 3 (Ms4a3), found in Mus musculus (Mouse).